The sequence spans 196 residues: Potassium-transporting ATPase KdpC subunit (196 aa).

Residues 17–37 (LLLLVATAGLGLVYPLAVFAV) traverse the membrane as a helical segment. The segment at 73 to 93 (QPRPSAAGDGYDPTASGASNL) is disordered.

The protein belongs to the KdpC family. The system is composed of three essential subunits: KdpA, KdpB and KdpC.

Its subcellular location is the cell membrane. Functionally, part of the high-affinity ATP-driven potassium transport (or Kdp) system, which catalyzes the hydrolysis of ATP coupled with the electrogenic transport of potassium into the cytoplasm. This subunit acts as a catalytic chaperone that increases the ATP-binding affinity of the ATP-hydrolyzing subunit KdpB by the formation of a transient KdpB/KdpC/ATP ternary complex. In Kineococcus radiotolerans (strain ATCC BAA-149 / DSM 14245 / SRS30216), this protein is Potassium-transporting ATPase KdpC subunit.